The sequence spans 118 residues: Basic phospholipase A2 2 (118 aa).

Disulfide bonds link Cys-11–Cys-71, Cys-27–Cys-117, Cys-29–Cys-45, Cys-44–Cys-98, Cys-51–Cys-91, Cys-60–Cys-84, and Cys-78–Cys-89. Residues Tyr-28, Gly-30, and Gly-32 each contribute to the Ca(2+) site. His-48 is a catalytic residue. Asp-49 provides a ligand contact to Ca(2+). Asp-92 is an active-site residue.

The protein belongs to the phospholipase A2 family. Group I subfamily. D49 sub-subfamily. Ca(2+) serves as cofactor. As to expression, expressed by the venom gland.

The protein localises to the secreted. It carries out the reaction a 1,2-diacyl-sn-glycero-3-phosphocholine + H2O = a 1-acyl-sn-glycero-3-phosphocholine + a fatty acid + H(+). Snake venom phospholipase A2 (PLA2) that inhibits neuromuscular transmission by blocking acetylcholine release from the nerve termini. PLA2 catalyzes the calcium-dependent hydrolysis of the 2-acyl groups in 3-sn-phosphoglycerides. The chain is Basic phospholipase A2 2 from Laticauda colubrina (Yellow-lipped sea krait).